A 141-amino-acid polypeptide reads, in one-letter code: Small ribosomal subunit protein uS8 (141 aa).

It belongs to the universal ribosomal protein uS8 family. In terms of assembly, part of the 30S ribosomal subunit. Contacts proteins S5 and S12.

One of the primary rRNA binding proteins, it binds directly to 16S rRNA central domain where it helps coordinate assembly of the platform of the 30S subunit. The polypeptide is Small ribosomal subunit protein uS8 (Mycoplasma genitalium (strain ATCC 33530 / DSM 19775 / NCTC 10195 / G37) (Mycoplasmoides genitalium)).